Reading from the N-terminus, the 461-residue chain is Asparagine--tRNA ligase (461 aa).

It belongs to the class-II aminoacyl-tRNA synthetase family. In terms of assembly, homodimer.

Its subcellular location is the cytoplasm. The catalysed reaction is tRNA(Asn) + L-asparagine + ATP = L-asparaginyl-tRNA(Asn) + AMP + diphosphate + H(+). The chain is Asparagine--tRNA ligase from Geobacter metallireducens (strain ATCC 53774 / DSM 7210 / GS-15).